Here is a 212-residue protein sequence, read N- to C-terminus: MKYMVYHLQIRNDFHCPTCRQPKVFFYNTLEEAYNKACNYIGNMDDFDREMLKKGSSIWIDEWIRRKNGDEYQIIKITTNKEYELLKYENEKFNLDSDVDENSDVNEDSNVDENIIKYMLLHIKVKTSKWCPNNIKYFVSFYFTLENACDFADIGDKTNLLKNLESVWINKNKIDVGLCSKGGDYFQIIELESDKKINLNKCCEQLKKLKYN.

This is an uncharacterized protein from Acanthamoeba polyphaga mimivirus (APMV).